The chain runs to 234 residues: Large ribosomal subunit protein uL1 (234 aa).

The protein belongs to the universal ribosomal protein uL1 family. In terms of assembly, part of the 50S ribosomal subunit.

In terms of biological role, binds directly to 23S rRNA. The L1 stalk is quite mobile in the ribosome, and is involved in E site tRNA release. Its function is as follows. Protein L1 is also a translational repressor protein, it controls the translation of the L11 operon by binding to its mRNA. The polypeptide is Large ribosomal subunit protein uL1 (Desulfosudis oleivorans (strain DSM 6200 / JCM 39069 / Hxd3) (Desulfococcus oleovorans)).